The sequence spans 110 residues: Late cornified envelope-like proline-rich protein 1 (110 aa).

Positions 1–24 (MSSDDKNKPGEPKNEPKQCDPGCE) are disordered.

The protein belongs to the cornifin (SPRR) family.

The chain is Late cornified envelope-like proline-rich protein 1 (LELP1) from Bos taurus (Bovine).